The following is a 309-amino-acid chain: Aspartate carbamoyltransferase catalytic subunit (309 aa).

The carbamoyl phosphate site is built by R57 and T58. L-aspartate is bound at residue K86. Carbamoyl phosphate-binding residues include R107, H135, and Q138. Residues R168 and R229 each coordinate L-aspartate. Residues L269 and P270 each contribute to the carbamoyl phosphate site.

It belongs to the aspartate/ornithine carbamoyltransferase superfamily. ATCase family. Heterooligomer of catalytic and regulatory chains.

It carries out the reaction carbamoyl phosphate + L-aspartate = N-carbamoyl-L-aspartate + phosphate + H(+). Its pathway is pyrimidine metabolism; UMP biosynthesis via de novo pathway; (S)-dihydroorotate from bicarbonate: step 2/3. Functionally, catalyzes the condensation of carbamoyl phosphate and aspartate to form carbamoyl aspartate and inorganic phosphate, the committed step in the de novo pyrimidine nucleotide biosynthesis pathway. This is Aspartate carbamoyltransferase catalytic subunit from Methanopyrus kandleri (strain AV19 / DSM 6324 / JCM 9639 / NBRC 100938).